The sequence spans 546 residues: Smad protein daf-8 (546 aa).

The MH1 domain occupies 16–137 (AMAQKVLEET…YRWVELPTCQ (122 aa)). 2 disordered regions span residues 234 to 268 (LQQS…FIPN) and 292 to 317 (ENFS…PIEP). Over residues 292–302 (ENFSSENNGNR) the composition is skewed to polar residues. The MH2 domain maps to 349 to 546 (WLKLIYYEEG…APPRICSSRT (198 aa)).

Belongs to the dwarfin/SMAD family. Homodimer. Interacts with R-SMAD daf-14 and co-SMAD daf-3. Interacts with orphan nuclear receptor nhr-69. Expressed in the excretory cell and gonadal distal tip cells (DTCs).

It is found in the cytoplasm. The protein resides in the nucleus. Probably a receptor-regulated SMAD (R-SMAD) that is an intracellular signal transducer and transcriptional modulator activated by TGF-beta-like daf-7 signaling. Plays a role in TGF-beta-like daf-7 signaling in regulating entry into a developmentally arrested larval state known as dauer, in response to harsh environmental conditions; partially redundant with R-SMAD daf-14. Plays a role in inhibiting mitosis and promoting a switch to meiosis in the germ line, perhaps by down-regulating lag-2 transcription in the gonadal distal tip cells (DTCs). In cooperation with orphan nuclear receptor nhr-69 modulates the Insulin/IGF-1-like signaling (IIS) pathway, perhaps by regulating expression of the potassium channel exp-2, which in turn modulates the secretion of the insulin-like peptide daf-28. The chain is Smad protein daf-8 from Caenorhabditis elegans.